A 240-amino-acid chain; its full sequence is tRNA (guanine-N(1)-)-methyltransferase (240 aa).

Residues glycine 108 and 127–132 (LGDYIL) contribute to the S-adenosyl-L-methionine site.

This sequence belongs to the RNA methyltransferase TrmD family. As to quaternary structure, homodimer.

The protein resides in the cytoplasm. It carries out the reaction guanosine(37) in tRNA + S-adenosyl-L-methionine = N(1)-methylguanosine(37) in tRNA + S-adenosyl-L-homocysteine + H(+). Functionally, specifically methylates guanosine-37 in various tRNAs. This chain is tRNA (guanine-N(1)-)-methyltransferase, found in Streptococcus sanguinis (strain SK36).